Reading from the N-terminus, the 349-residue chain is Nicotinate-nucleotide--dimethylbenzimidazole phosphoribosyltransferase (349 aa).

Glu315 acts as the Proton acceptor in catalysis.

It belongs to the CobT family.

The enzyme catalyses 5,6-dimethylbenzimidazole + nicotinate beta-D-ribonucleotide = alpha-ribazole 5'-phosphate + nicotinate + H(+). Its pathway is nucleoside biosynthesis; alpha-ribazole biosynthesis; alpha-ribazole from 5,6-dimethylbenzimidazole: step 1/2. In terms of biological role, catalyzes the synthesis of alpha-ribazole-5'-phosphate from nicotinate mononucleotide (NAMN) and 5,6-dimethylbenzimidazole (DMB). In Variovorax paradoxus (strain S110), this protein is Nicotinate-nucleotide--dimethylbenzimidazole phosphoribosyltransferase.